Here is a 633-residue protein sequence, read N- to C-terminus: MASSPESAPPTNSTSSPSPPSNTNSTTSSPPAPSPPSPTPPQGDSSSSPPPDSTSPPAPQAPNPPNSSNNSPSPPSQGGGGERGNGGNNGGNDTPPSRGSPPSPPSRSNGDNGGSRSSPPGDTGGSRSDNPPSSGGSSGGGGGGRSNTNTAIIVGVLVGAGLLMIVLIIVCLRRKKKRKDSFYPEPMKGNQYQYYGNNNNNNASQNYPNWHLNSQGQNQQSTGGWGGGGPSPPPPPRMPTSGEDSSMYSGPSRPVLPPPSPALALGFNKSTFTYQELAAATGGFTDANLLGQGGFGYVHKGVLPSGKEVAVKSLKAGSGQGEREFQAEVDIISRVHHRYLVSLVGYCIADGQRMLVYEFVPNKTLEYHLHGKNLPVMEFSTRLRIALGAAKGLAYLHEDCHPRIIHRDIKSANILLDFNFDAMVADFGLAKLTSDNNTHVSTRVMGTFGYLAPEYASSGKLTEKSDVFSYGVMLLELITGKRPVDNSITMDDTLVDWARPLMARALEDGNFNELADARLEGNYNPQEMARMVTCAAASIRHSGRKRPKMSQIVRALEGEVSLDALNEGVKPGHSNVYGSLGASSDYSQTSYNADMKKFRQIALSSQEFPVSDCEGTSSNDSRDMGTKSPTPPK.

Positions 1-29 (MASSPESAPPTNSTSSPSPPSNTNSTTSS) are enriched in low complexity. The segment at 1 to 145 (MASSPESAPP…GSSGGGGGGR (145 aa)) is disordered. The Extracellular portion of the chain corresponds to 1-151 (MASSPESAPP…GGGRSNTNTA (151 aa)). Residues asparagine 12 and asparagine 24 are each glycosylated (N-linked (GlcNAc...) asparagine). 2 stretches are compositionally biased toward pro residues: residues 30 to 41 (PPAPSPPSPTPP) and 48 to 65 (SPPPDSTSPPAPQAPNPP). An N-linked (GlcNAc...) asparagine glycan is attached at asparagine 66. Gly residues predominate over residues 77 to 90 (QGGGGERGNGGNNG). A compositionally biased stretch (low complexity) spans 106–135 (SRSNGDNGGSRSSPPGDTGGSRSDNPPSSG). The span at 136-145 (GSSGGGGGGR) shows a compositional bias: gly residues. A helical transmembrane segment spans residues 152–172 (IIVGVLVGAGLLMIVLIIVCL). At 173–633 (RRKKKRKDSF…MGTKSPTPPK (461 aa)) the chain is on the cytoplasmic side. Residues 193 to 222 (QYYGNNNNNNASQNYPNWHLNSQGQNQQST) show a composition bias toward low complexity. The disordered stretch occupies residues 193-255 (QYYGNNNNNN…SMYSGPSRPV (63 aa)). Phosphothreonine is present on threonine 273. In terms of domain architecture, Protein kinase spans 284–562 (FTDANLLGQG…VRALEGEVSL (279 aa)). Residues 290 to 298 (LGQGGFGYV) and lysine 312 each bind ATP. The residue at position 357 (tyrosine 357) is a Phosphotyrosine. Aspartate 408 (proton acceptor) is an active-site residue. Phosphoserine is present on serine 441. Residues threonine 442 and threonine 447 each carry the phosphothreonine modification. Tyrosine 455 is subject to Phosphotyrosine. Over residues 608–619 (FPVSDCEGTSSN) the composition is skewed to polar residues. A disordered region spans residues 608–633 (FPVSDCEGTSSNDSRDMGTKSPTPPK).

Belongs to the protein kinase superfamily. Ser/Thr protein kinase family. Mostly expressed in inflorescence bolts. Also present in roots, stems, germinated seeds, cotyledons, pollen, stamen and stigma.

Its subcellular location is the cell membrane. It catalyses the reaction L-seryl-[protein] + ATP = O-phospho-L-seryl-[protein] + ADP + H(+). The catalysed reaction is L-threonyl-[protein] + ATP = O-phospho-L-threonyl-[protein] + ADP + H(+). With respect to regulation, activated by ABA and Ca(2+). Required during abscisic acid (ABA)-mediated activation of Ca(2+) channels. Regulates ABA signaling pathways. Modulates the expression of genes related to cell elongation and ABA signaling during root growth. The chain is Proline-rich receptor-like protein kinase PERK4 (PERK4) from Arabidopsis thaliana (Mouse-ear cress).